The following is a 299-amino-acid chain: Taste receptor type 2 member 19 (299 aa).

Met-1 is a topological domain (extracellular). Residues Met-2–Val-22 traverse the membrane as a helical segment. The Cytoplasmic portion of the chain corresponds to Ala-23–Arg-55. The helical transmembrane segment at Ile-56 to Tyr-76 threads the bilayer. At Gly-77–Ala-87 the chain is on the extracellular side. A helical membrane pass occupies residues Trp-88–Leu-108. The Cytoplasmic portion of the chain corresponds to Lys-109–Ser-127. Residues Val-128–Thr-148 form a helical membrane-spanning segment. Residues Met-149 to Thr-181 are Extracellular-facing. Asn-161 carries an N-linked (GlcNAc...) asparagine glycan. The chain crosses the membrane as a helical span at residues Leu-182–Leu-202. The Cytoplasmic portion of the chain corresponds to Cys-203–Lys-226. Residues Ala-227–Thr-247 traverse the membrane as a helical segment. Residues Ser-248–Leu-259 lie on the Extracellular side of the membrane. The helical transmembrane segment at Val-260–Ile-280 threads the bilayer. Topologically, residues Met-281–Arg-299 are cytoplasmic.

The protein belongs to the G-protein coupled receptor T2R family. In terms of tissue distribution, expressed in subsets of taste receptor cells of the tongue and exclusively in gustducin-positive cells.

The protein resides in the membrane. Its function is as follows. Receptor that may play a role in the perception of bitterness and is gustducin-linked. May play a role in sensing the chemical composition of the gastrointestinal content. The activity of this receptor may stimulate alpha gustducin, mediate PLC-beta-2 activation and lead to the gating of TRPM5. This is Taste receptor type 2 member 19 (TAS2R19) from Homo sapiens (Human).